A 244-amino-acid chain; its full sequence is uncharacterized protein (244 aa).

It belongs to the MtxX family.

This is an uncharacterized protein from Methanocaldococcus jannaschii (strain ATCC 43067 / DSM 2661 / JAL-1 / JCM 10045 / NBRC 100440) (Methanococcus jannaschii).